A 412-amino-acid chain; its full sequence is Lipoyl synthase, mitochondrial (412 aa).

The transit peptide at 1 to 28 directs the protein to the mitochondrion; it reads MASIAPSLKRAHAPLRKALTASSTIRAF. Residues cysteine 124, cysteine 129, cysteine 135, cysteine 155, cysteine 159, cysteine 162, and serine 372 each contribute to the [4Fe-4S] cluster site. Residues 138–361 enclose the Radical SAM core domain; the sequence is GSDKNAATAT…NKRALDMGFL (224 aa).

This sequence belongs to the radical SAM superfamily. Lipoyl synthase family. It depends on [4Fe-4S] cluster as a cofactor.

The protein resides in the mitochondrion. The catalysed reaction is [[Fe-S] cluster scaffold protein carrying a second [4Fe-4S](2+) cluster] + N(6)-octanoyl-L-lysyl-[protein] + 2 oxidized [2Fe-2S]-[ferredoxin] + 2 S-adenosyl-L-methionine + 4 H(+) = [[Fe-S] cluster scaffold protein] + N(6)-[(R)-dihydrolipoyl]-L-lysyl-[protein] + 4 Fe(3+) + 2 hydrogen sulfide + 2 5'-deoxyadenosine + 2 L-methionine + 2 reduced [2Fe-2S]-[ferredoxin]. Its pathway is protein modification; protein lipoylation via endogenous pathway; protein N(6)-(lipoyl)lysine from octanoyl-[acyl-carrier-protein]: step 2/2. In terms of biological role, catalyzes the radical-mediated insertion of two sulfur atoms into the C-6 and C-8 positions of the octanoyl moiety bound to the lipoyl domains of lipoate-dependent enzymes, thereby converting the octanoylated domains into lipoylated derivatives. The protein is Lipoyl synthase, mitochondrial of Fusarium vanettenii (strain ATCC MYA-4622 / CBS 123669 / FGSC 9596 / NRRL 45880 / 77-13-4) (Fusarium solani subsp. pisi).